The primary structure comprises 316 residues: uncharacterized protein (316 aa).

BNR repeat units lie at residues 62 to 73 (FISDSQGLKFSP), 124 to 135 (KISVDNGLTWSN), 196 to 207 (FISRDGGLTWRV), and 242 to 253 (YFSLDQGRTWNQ).

This is an uncharacterized protein from Saccharomyces cerevisiae (strain ATCC 204508 / S288c) (Baker's yeast).